A 159-amino-acid chain; its full sequence is Heavy metal-associated isoprenylated plant protein 28 (159 aa).

The HMA domain maps to 10–73; that stretch reads LQTIEMRVHM…KVRKTGRRAE (64 aa). Cys21 and Cys24 together coordinate a metal cation. Cysteine methyl ester is present on Cys156. Residue Cys156 is the site of S-farnesyl cysteine attachment. A propeptide spans 157 to 159 (removed in mature form); it reads SIM.

The protein belongs to the HIPP family.

Functionally, heavy-metal-binding protein. In Arabidopsis thaliana (Mouse-ear cress), this protein is Heavy metal-associated isoprenylated plant protein 28.